The chain runs to 218 residues: LOB domain-containing protein 29 (218 aa).

The 103-residue stretch at Ser10 to Ala112 folds into the LOB domain.

This sequence belongs to the LOB domain-containing protein family. In terms of tissue distribution, expressed in roots.

Functionally, involved in lateral root formation. Regulated by the transcriptional activators ARF7 and ARF19. The chain is LOB domain-containing protein 29 (LBD29) from Arabidopsis thaliana (Mouse-ear cress).